The primary structure comprises 269 residues: Oligoribonuclease, mitochondrial (269 aa).

The 173-residue stretch at 55 to 227 (LVWIDCEMTG…SDIKESIAQL (173 aa)) folds into the Exonuclease domain. Tyr-184 is a catalytic residue. The disordered stretch occupies residues 240–269 (ETESVESIGSEQPESPSSSTSSLKRQRTDF). Residues 245–261 (ESIGSEQPESPSSSTSS) are compositionally biased toward low complexity.

This sequence belongs to the oligoribonuclease family.

The protein localises to the mitochondrion. 3'-to-5' exoribonuclease specific for small oligoribonucleotides. This Saccharomyces cerevisiae (strain ATCC 204508 / S288c) (Baker's yeast) protein is Oligoribonuclease, mitochondrial (REX2).